The primary structure comprises 812 residues: Ras guanine nucleotide exchange factor J (812 aa).

Low complexity-rich tracts occupy residues 1–36 and 53–65; these read MSNP…NSKS and LLNR…NLNN. Residues 1 to 146 form a disordered region; that stretch reads MSNPVSINNS…GGSSGGLNMS (146 aa). The span at 75–86 shows a compositional bias: polar residues; it reads SFTSNYQNIYTP. Low complexity predominate over residues 87–101; it reads NNNSYNSSNNNNNNN. The segment covering 131 to 141 has biased composition (gly residues); it reads NSGGGGGGSSG. The 33-residue stretch at 214-246 folds into the LisH domain; that stretch reads GRDTMLQLILQHLQFEGLMDSRKLLEEEARVQY. Positions 320–382 are disordered; that stretch reads IIYVDDKEKE…NNSIGNSNSY (63 aa). Basic and acidic residues predominate over residues 323–343; sequence VDDKEKEKEKEKEKEKEKDKF. Low complexity predominate over residues 344-382; sequence GPNSTNSLSGSGSSPNIPSGMNNNSSSIGNNSIGNSNSY. The N-terminal Ras-GEF domain maps to 409–535; the sequence is NKPQVKAASL…LSESLNAKIK (127 aa). A Ras-GEF domain is found at 573–804; that stretch reads DEEEIARQLT…YSRSMSFEPR (232 aa).

Promotes the exchange of Ras-bound GDP by GTP. The protein is Ras guanine nucleotide exchange factor J (gefJ) of Dictyostelium discoideum (Social amoeba).